The following is a 1273-amino-acid chain: DNA-directed RNA polymerase subunit beta (1273 aa).

Residues A1252–S1273 form a disordered region.

This sequence belongs to the RNA polymerase beta chain family. The RNAP catalytic core consists of 2 alpha, 1 beta, 1 beta' and 1 omega subunit. When a sigma factor is associated with the core the holoenzyme is formed, which can initiate transcription.

The catalysed reaction is RNA(n) + a ribonucleoside 5'-triphosphate = RNA(n+1) + diphosphate. Functionally, DNA-dependent RNA polymerase catalyzes the transcription of DNA into RNA using the four ribonucleoside triphosphates as substrates. The sequence is that of DNA-directed RNA polymerase subunit beta from Dehalococcoides mccartyi (strain CBDB1).